A 454-amino-acid polypeptide reads, in one-letter code: Bifunctional protein GlmU (454 aa).

The segment at 1-228 (MTLPLHVVIL…PQHVEGANDP (228 aa)) is pyrophosphorylase. UDP-N-acetyl-alpha-D-glucosamine contacts are provided by residues 10–13 (LAAG), Lys-24, Gln-76, 81–82 (GT), 103–105 (YGD), Gly-138, Glu-153, Asn-168, and Asn-226. Position 105 (Asp-105) interacts with Mg(2+). Asn-226 is a binding site for Mg(2+). Residues 229 to 249 (WQLAQLERAWQLRAARTLCLQ) are linker. The tract at residues 250-454 (GVRMADPARV…IEGWKRPTKK (205 aa)) is N-acetyltransferase. UDP-N-acetyl-alpha-D-glucosamine is bound by residues Arg-332 and Lys-350. The Proton acceptor role is filled by His-362. Tyr-365 and Asn-376 together coordinate UDP-N-acetyl-alpha-D-glucosamine. Acetyl-CoA contacts are provided by residues Ala-379, 385-386 (NY), Ser-404, Ala-422, and Arg-439.

In the N-terminal section; belongs to the N-acetylglucosamine-1-phosphate uridyltransferase family. It in the C-terminal section; belongs to the transferase hexapeptide repeat family. As to quaternary structure, homotrimer. The cofactor is Mg(2+).

Its subcellular location is the cytoplasm. It catalyses the reaction alpha-D-glucosamine 1-phosphate + acetyl-CoA = N-acetyl-alpha-D-glucosamine 1-phosphate + CoA + H(+). The enzyme catalyses N-acetyl-alpha-D-glucosamine 1-phosphate + UTP + H(+) = UDP-N-acetyl-alpha-D-glucosamine + diphosphate. Its pathway is nucleotide-sugar biosynthesis; UDP-N-acetyl-alpha-D-glucosamine biosynthesis; N-acetyl-alpha-D-glucosamine 1-phosphate from alpha-D-glucosamine 6-phosphate (route II): step 2/2. It functions in the pathway nucleotide-sugar biosynthesis; UDP-N-acetyl-alpha-D-glucosamine biosynthesis; UDP-N-acetyl-alpha-D-glucosamine from N-acetyl-alpha-D-glucosamine 1-phosphate: step 1/1. It participates in bacterial outer membrane biogenesis; LPS lipid A biosynthesis. Functionally, catalyzes the last two sequential reactions in the de novo biosynthetic pathway for UDP-N-acetylglucosamine (UDP-GlcNAc). The C-terminal domain catalyzes the transfer of acetyl group from acetyl coenzyme A to glucosamine-1-phosphate (GlcN-1-P) to produce N-acetylglucosamine-1-phosphate (GlcNAc-1-P), which is converted into UDP-GlcNAc by the transfer of uridine 5-monophosphate (from uridine 5-triphosphate), a reaction catalyzed by the N-terminal domain. This Xanthomonas euvesicatoria pv. vesicatoria (strain 85-10) (Xanthomonas campestris pv. vesicatoria) protein is Bifunctional protein GlmU.